We begin with the raw amino-acid sequence, 126 residues long: Large ribosomal subunit protein bL12 (126 aa).

It belongs to the bacterial ribosomal protein bL12 family. Homodimer. Part of the ribosomal stalk of the 50S ribosomal subunit. Forms a multimeric L10(L12)X complex, where L10 forms an elongated spine to which 2 to 4 L12 dimers bind in a sequential fashion. Binds GTP-bound translation factors.

Functionally, forms part of the ribosomal stalk which helps the ribosome interact with GTP-bound translation factors. Is thus essential for accurate translation. This chain is Large ribosomal subunit protein bL12, found in Tropheryma whipplei (strain TW08/27) (Whipple's bacillus).